We begin with the raw amino-acid sequence, 119 residues long: Circadian clock oscillator protein KaiB (119 aa).

The protein belongs to the KaiB family. In terms of assembly, may undergo a major conformational rearrangment; in the free state forms homooligomers. When bound to KaiC switches to a monomeric thioredoxin-fold (KaiB(fs)). The active oscillator complex is probably KaiC(6):KaiB(6).

In terms of biological role, component of the KaiBC clock protein complex, which constitutes the main circadian regulator in cyanobacteria; it may modify the ATPase activity of KaiC. May be a metamorphic protein which reversibly switches between an inactive tetrameric fold and a rare, thioredoxin-like monomeric fold (KaiB(fs)). KaiB(fs) binds phospho-KaiC, and perhaps clock output effectors. The sequence is that of Circadian clock oscillator protein KaiB from Prochlorococcus marinus (strain MIT 9303).